Here is a 681-residue protein sequence, read N- to C-terminus: MKELQLPEKRKSNTGLSWFPSPRILQVFLVLLGAIVAFLSFSATSSIISSSPKHHSCHDNVEEAAVKYHYSTISSDELPISNERLASLGLTPNQPVKITDIGGKEKSIKGRFLHITDMHPDLYYKENTSIDDTCHRGKPKNDGDRAARFGNAMKGCDGPPDLMYYTLDWIHKNLSDEIDFIIWTGDNVRHDNDRRIPRTEQQIFDMNRQVSELFLKTFKDHESDDPRDLKVKIIPSLGNNDVFPHNLFSPGPTLQTRELYDIWSQFIPPAQQNTFDRYASFFVEAIPGKLAVISLNTLYMFKGNPLVDNCSNKKQPGYKMLLWVGFTLQELRDRGMKVWLSGHVPPIPKNFDSSCSDKLALWLHEYSDIIIGGFYGHMNMDHFIPVDGEKAWDDIANSMAISEYSGFFEQDFLEDAIAAREIRAEGAKPVKKVNYMNGVRDAYYSRISEDVKKLSEKDPLYERYSIVHIGTSIIPTFNPGFRIWEYNITELQTEEEVLHSHQPWDSFFEHLDVEIQKIIEEAEEAEEVEAFEDDEQIDSEIPDVLISKKKKKKGKKGKKNKNSKNWWKTDKTFPKKKPKNLPPGPAYENQLFSPLRFVQYYADLKEIDKQYLKLLKEGKSEDEAASIAFKYQIEYASDDKPYPMKTTLVKDYIELASELSGNDKLWDTFLERAFCSSGYED.

Over 1 to 23 (MKELQLPEKRKSNTGLSWFPSPR) the chain is Cytoplasmic. Residues 24–44 (ILQVFLVLLGAIVAFLSFSAT) traverse the membrane as a helical; Signal-anchor for type II membrane protein segment. Topologically, residues 45 to 681 (SSIISSSPKH…RAFCSSGYED (637 aa)) are vacuolar. 4 N-linked (GlcNAc...) asparagine glycosylation sites follow: Asn-127, Asn-173, Asn-309, and Asn-487. A compositionally biased stretch (basic residues) spans 549–562 (KKKKKGKKGKKNKN). Positions 549 to 585 (KKKKKGKKGKKNKNSKNWWKTDKTFPKKKPKNLPPGP) are disordered.

This sequence belongs to the endopolyphosphatase PPN1 family. It depends on a divalent metal cation as a cofactor. Processing by proteases in the vacuole may be required for activation.

It localises to the vacuole membrane. The enzyme catalyses [phosphate](n+1) + n H2O = (n+1) phosphate + n H(+). Its function is as follows. Catalyzes the hydrolysis of inorganic polyphosphate (polyP) chains of many hundreds of phosphate residues into shorter lengths. The chain is Endopolyphosphatase (PPN1) from Kluyveromyces lactis (strain ATCC 8585 / CBS 2359 / DSM 70799 / NBRC 1267 / NRRL Y-1140 / WM37) (Yeast).